The sequence spans 1321 residues: Glycerophosphocholine phosphodiesterase GDE1 (1321 aa).

Residues 1-209 (MKFGKTFPNH…GTNQQHSYFQ (209 aa)) enclose the SPX domain. ANK repeat units follow at residues 417–446 (YKRT…EWDA), 463–495 (ENLT…SLNS), 497–524 (RLLH…DIDY), 529–558 (NLET…NMEL), 563–592 (FGWT…KYDL), and 596–626 (SGWT…AITR). Disordered regions lie at residues 630-698 (ATDW…NKGN), 868-893 (QLGR…EQIA), and 1056-1079 (QRHQ…LSMD). Over residues 633–646 (WNKSTRPTETTNGL) the composition is skewed to polar residues. Low complexity predominate over residues 651-668 (TPSESGSTTTGSENKSSS). Positions 873-893 (TPNTYDQRSRHQASQQKEQIA) are enriched in polar residues. In terms of domain architecture, GP-PDE spans 972–1311 (TRVIGHRGLG…DSVLAVRKGL (340 aa)).

This sequence belongs to the GDE1 family.

Its subcellular location is the cytoplasm. The enzyme catalyses sn-glycerol 3-phosphocholine + H2O = sn-glycerol 3-phosphate + choline + H(+). In terms of biological role, glycerophosphocholine glycerophosphodiesterase responsible for the hydrolysis of intracellular glycerophosphocholine into glycerol-phosphate and choline. The choline is used for phosphatidyl-choline synthesis. Required for utilization of glycerophosphocholine as phosphate source. The protein is Glycerophosphocholine phosphodiesterase GDE1 (GDE1) of Eremothecium gossypii (strain ATCC 10895 / CBS 109.51 / FGSC 9923 / NRRL Y-1056) (Yeast).